The sequence spans 300 residues: Light-independent protochlorophyllide reductase iron-sulfur ATP-binding protein (300 aa).

ATP-binding positions include 43–48 and Lys72; that span reads GIGKST. Mg(2+) is bound at residue Ser47. Cys128 and Cys162 together coordinate [4Fe-4S] cluster. 213–214 serves as a coordination point for ATP; it reads NR.

It belongs to the NifH/BchL/ChlL family. As to quaternary structure, homodimer. Protochlorophyllide reductase is composed of three subunits; ChlL, ChlN and ChlB. [4Fe-4S] cluster serves as cofactor.

It carries out the reaction chlorophyllide a + oxidized 2[4Fe-4S]-[ferredoxin] + 2 ADP + 2 phosphate = protochlorophyllide a + reduced 2[4Fe-4S]-[ferredoxin] + 2 ATP + 2 H2O. The protein operates within porphyrin-containing compound metabolism; chlorophyll biosynthesis (light-independent). Functionally, component of the dark-operative protochlorophyllide reductase (DPOR) that uses Mg-ATP and reduced ferredoxin to reduce ring D of protochlorophyllide (Pchlide) to form chlorophyllide a (Chlide). This reaction is light-independent. The L component serves as a unique electron donor to the NB-component of the complex, and binds Mg-ATP. The polypeptide is Light-independent protochlorophyllide reductase iron-sulfur ATP-binding protein (Synechococcus sp. (strain RCC307)).